A 234-amino-acid polypeptide reads, in one-letter code: Sugar fermentation stimulation protein A (234 aa).

The segment at residues 201–220 is a DNA-binding region (H-T-H motif); sequence LLSEAQNKGVEVLAYKAELS.

Belongs to the SfsA family.

In terms of biological role, binds to DNA non-specifically. Could be a regulatory factor involved in maltose metabolism. This is Sugar fermentation stimulation protein A from Salmonella arizonae (strain ATCC BAA-731 / CDC346-86 / RSK2980).